The following is a 174-amino-acid chain: Ribosome maturation factor RimM (174 aa).

Residues 96 to 169 form the PRC barrel domain; sequence KDTFFICDLI…KMVVDLPQGL (74 aa).

Belongs to the RimM family. In terms of assembly, binds ribosomal protein uS19.

The protein localises to the cytoplasm. Functionally, an accessory protein needed during the final step in the assembly of 30S ribosomal subunit, possibly for assembly of the head region. Essential for efficient processing of 16S rRNA. May be needed both before and after RbfA during the maturation of 16S rRNA. It has affinity for free ribosomal 30S subunits but not for 70S ribosomes. The chain is Ribosome maturation factor RimM from Acetivibrio thermocellus (strain ATCC 27405 / DSM 1237 / JCM 9322 / NBRC 103400 / NCIMB 10682 / NRRL B-4536 / VPI 7372) (Clostridium thermocellum).